The sequence spans 176 residues: Epididymal-specific lipocalin-9 (176 aa).

The first 15 residues, Met1–Ala15, serve as a signal peptide directing secretion. N-linked (GlcNAc...) asparagine glycosylation is found at Asn68 and Asn129. Cys83 and Cys161 form a disulfide bridge.

The protein belongs to the calycin superfamily. Lipocalin family.

Its subcellular location is the secreted. The polypeptide is Epididymal-specific lipocalin-9 (Homo sapiens (Human)).